A 164-amino-acid polypeptide reads, in one-letter code: Cilia- and flagella-associated protein 20 (164 aa).

It belongs to the CFAP20 family. As to quaternary structure, microtubule inner protein component of sperm flagellar doublet microtubules.

The protein localises to the nucleus. Its subcellular location is the cytoplasm. It is found in the cytoskeleton. The protein resides in the microtubule organizing center. It localises to the centrosome. The protein localises to the centriole. Its subcellular location is the cilium basal body. It is found in the cilium axoneme. The protein resides in the flagellum axoneme. In terms of biological role, cilium- and flagellum-specific protein that plays a role in axonemal structure organization and motility. Microtubule inner protein (MIP) part of the dynein-decorated doublet microtubules (DMTs) in cilia axoneme, which is required for motile cilia beating. Involved in the regulation of the size and morphology of cilia. Required for axonemal microtubules polyglutamylation. This is Cilia- and flagella-associated protein 20 (Cfap20) from Rattus norvegicus (Rat).